We begin with the raw amino-acid sequence, 292 residues long: Elongation factor Ts (292 aa).

The involved in Mg(2+) ion dislocation from EF-Tu stretch occupies residues 80–83; it reads TDFV.

Belongs to the EF-Ts family.

The protein localises to the cytoplasm. Its function is as follows. Associates with the EF-Tu.GDP complex and induces the exchange of GDP to GTP. It remains bound to the aminoacyl-tRNA.EF-Tu.GTP complex up to the GTP hydrolysis stage on the ribosome. In Psychrobacter sp. (strain PRwf-1), this protein is Elongation factor Ts.